A 339-amino-acid polypeptide reads, in one-letter code: Purple acid phosphatase 4 (339 aa).

A signal peptide spans Met-1–Ala-31. Asp-53 lines the Fe cation pocket. Asn-61 is a glycosylation site (N-linked (GlcNAc...) asparagine). 2 residues coordinate Fe cation: Asp-86 and Tyr-89. Asp-86 contributes to the Zn(2+) binding site. 2 residues coordinate Zn(2+): Asn-124 and His-218. His-227 serves as the catalytic Proton donor. Residue His-253 coordinates Zn(2+). His-253–His-255 contributes to the substrate binding site. Residue His-255 participates in Fe cation binding. A glycan (N-linked (GlcNAc...) asparagine) is linked at Asn-284.

It belongs to the metallophosphoesterase superfamily. Purple acid phosphatase family. In terms of assembly, homodimer. Requires Fe cation as cofactor. Zn(2+) is required as a cofactor. In terms of tissue distribution, expressed in roots, stems, leaves, flowers and siliques.

It localises to the secreted. It carries out the reaction a phosphate monoester + H2O = an alcohol + phosphate. The sequence is that of Purple acid phosphatase 4 (PAP4) from Arabidopsis thaliana (Mouse-ear cress).